The sequence spans 581 residues: Myoneurin (581 aa).

The 66-residue stretch at 24-89 (CDCTIVIGEF…IYTGTLNLDS (66 aa)) folds into the BTB domain. Residues 167–193 (PKQGALAKKSSQTKKKKKAFNSQKTGQ) form a disordered region. Short sequence motifs (nuclear localization signal) lie at residues 174-190 (KKSS…NSQK) and 256-261 (KRKRGK). Ser288 is modified (phosphoserine). 7 consecutive C2H2-type zinc fingers follow at residues 301–323 (PMCN…MRIH), 329–351 (YVCH…VRTH), 357–380 (YKCE…RMHH), 386–408 (YKCD…ARKH), 414–436 (YVCD…VRRH), 442–464 (YVCD…SRKH), and 470–493 (FICE…TKVH).

It belongs to the krueppel C2H2-type zinc-finger protein family.

It localises to the nucleus. The chain is Myoneurin (MYNN) from Bos taurus (Bovine).